The sequence spans 265 residues: Uridylate kinase (265 aa).

Residues 1–29 form a disordered region; that stretch reads MTESREPHVAGSAAPRPEPANGLASGQPS. 40 to 43 contacts ATP; sequence KLGG. Residue Gly81 participates in UMP binding. ATP is bound by residues Gly82 and Arg86. UMP contacts are provided by residues Asp101 and 162–169; that span reads MGLPYFST. ATP contacts are provided by Phe195 and Asp198.

This sequence belongs to the UMP kinase family. As to quaternary structure, homohexamer.

The protein localises to the cytoplasm. The catalysed reaction is UMP + ATP = UDP + ADP. It functions in the pathway pyrimidine metabolism; CTP biosynthesis via de novo pathway; UDP from UMP (UMPK route): step 1/1. Its activity is regulated as follows. Inhibited by UTP. Catalyzes the reversible phosphorylation of UMP to UDP. The polypeptide is Uridylate kinase (Mycolicibacterium paratuberculosis (strain ATCC BAA-968 / K-10) (Mycobacterium paratuberculosis)).